The sequence spans 100 residues: MPKKRLVGVVVSDKMDKTVTVKVERLVKHAKFGKYVKRTKKFYAHDENNACRVGDVVEIEESRPLSKLKRWVVVNILERSKLSETPEIEETIDIEGGSEQ.

This sequence belongs to the universal ribosomal protein uS17 family. Part of the 30S ribosomal subunit.

Functionally, one of the primary rRNA binding proteins, it binds specifically to the 5'-end of 16S ribosomal RNA. This is Small ribosomal subunit protein uS17 from Fervidobacterium nodosum (strain ATCC 35602 / DSM 5306 / Rt17-B1).